Consider the following 367-residue polypeptide: Cyclin-D3-2 (367 aa).

Residues 324–335 (STTASVSSSSSS) show a composition bias toward low complexity. Positions 324–347 (STTASVSSSSSSPEPLLKRRRVQE) are disordered.

The protein belongs to the cyclin family. Cyclin D subfamily. Interacts with CDKA-1. Expressed in developing vegetative and floral primordia.

Promotes divisions in the guard cells (GCs) after the guard mother cells (GMC) symmetric division when in the presence of CDKA-1. The protein is Cyclin-D3-2 (CYCD3-2) of Arabidopsis thaliana (Mouse-ear cress).